We begin with the raw amino-acid sequence, 219 residues long: Orotate phosphoribosyltransferase (219 aa).

Position 26 (Lys-26) interacts with 5-phospho-alpha-D-ribose 1-diphosphate. Position 34-35 (34-35 (FF)) interacts with orotate. Residues 72-73 (YK), Arg-102, Lys-103, Lys-106, His-108, and 128-136 (DDVITAGTA) each bind 5-phospho-alpha-D-ribose 1-diphosphate. 2 residues coordinate orotate: Thr-132 and Arg-160.

This sequence belongs to the purine/pyrimidine phosphoribosyltransferase family. PyrE subfamily. As to quaternary structure, homodimer.

The catalysed reaction is orotidine 5'-phosphate + diphosphate = orotate + 5-phospho-alpha-D-ribose 1-diphosphate. Its pathway is pyrimidine metabolism; UMP biosynthesis via de novo pathway; UMP from orotate: step 1/2. In terms of biological role, catalyzes the transfer of a ribosyl phosphate group from 5-phosphoribose 1-diphosphate to orotate, leading to the formation of orotidine monophosphate (OMP). The polypeptide is Orotate phosphoribosyltransferase (URA5) (Yarrowia lipolytica (strain CLIB 122 / E 150) (Yeast)).